Consider the following 280-residue polypeptide: Putative sugar uptake protein (280 aa).

10 helical membrane passes run 4–21 (LIAL…LIAG), 33–52 (MGLG…IHPA), 56–78 (ITIF…GQFI), 91–113 (LSTG…EWTS), 117–136 (YLIG…LTAI), 149–166 (IILL…SSFP), 176–195 (LFLP…LLVS), 207–229 (WLNI…SAQL), 233–255 (ITAF…FFIG), and 262–279 (ELIA…GAAI).

This sequence belongs to the GRP transporter (TC 2.A.7.5) family.

The protein resides in the cell membrane. The chain is Putative sugar uptake protein from Lactobacillus helveticus (Lactobacillus suntoryeus).